The chain runs to 380 residues: Endopolygalacturonase AN8327 (380 aa).

Residues 1–19 (MFYALGPLALFAFATEVMA) form the signal peptide. The propeptide occupies 20-35 (TPVAYPMTTASPTLAK). Cysteine 39 and cysteine 57 form a disulfide bridge. 7 PbH1 repeats span residues 147–169 (LTDS…SING), 170–200 (CDGL…DIGE), 201–222 (SSNV…AVNS), 223–243 (GTSI…SIGS), 252–273 (VDTV…RIKA), 281–303 (IKGV…LIEQ), and 315–338 (TSGI…DSDG). The Proton donor role is filled by aspartate 215. A disulfide bridge connects residues cysteine 217 and cysteine 233. The active site involves histidine 237. An N-linked (GlcNAc...) asparagine glycan is attached at asparagine 327. Cysteine 345 and cysteine 350 are disulfide-bonded. The N-linked (GlcNAc...) asparagine glycan is linked to asparagine 352. Cysteine 369 and cysteine 378 form a disulfide bridge.

This sequence belongs to the glycosyl hydrolase 28 family.

The protein resides in the secreted. It carries out the reaction (1,4-alpha-D-galacturonosyl)n+m + H2O = (1,4-alpha-D-galacturonosyl)n + (1,4-alpha-D-galacturonosyl)m.. In terms of biological role, involved in maceration and soft-rotting of plant tissue. Hydrolyzes the 1,4-alpha glycosidic bonds of de-esterified pectate in the smooth region of the plant cell wall. The chain is Endopolygalacturonase AN8327 from Emericella nidulans (strain FGSC A4 / ATCC 38163 / CBS 112.46 / NRRL 194 / M139) (Aspergillus nidulans).